A 227-amino-acid polypeptide reads, in one-letter code: Transcription antitermination protein NusB (227 aa).

Disordered regions lie at residues 165 to 189 (ASES…SDED) and 201 to 227 (AEET…ADES). 2 stretches are compositionally biased toward acidic residues: residues 178-189 (DDSDALDDSDED) and 201-214 (AEET…AEDS). A compositionally biased stretch (basic and acidic residues) spans 215–227 (EVSKVSEEKADES).

The protein belongs to the NusB family.

Functionally, involved in transcription antitermination. Required for transcription of ribosomal RNA (rRNA) genes. Binds specifically to the boxA antiterminator sequence of the ribosomal RNA (rrn) operons. In Corynebacterium glutamicum (strain ATCC 13032 / DSM 20300 / JCM 1318 / BCRC 11384 / CCUG 27702 / LMG 3730 / NBRC 12168 / NCIMB 10025 / NRRL B-2784 / 534), this protein is Transcription antitermination protein NusB.